A 319-amino-acid polypeptide reads, in one-letter code: tRNA uridine(34) hydroxylase (319 aa).

The Rhodanese domain maps to 124-218; it reads LDEDTVILDA…YGKNEETKGE (95 aa). The Cysteine persulfide intermediate role is filled by C178.

Belongs to the TrhO family.

It carries out the reaction uridine(34) in tRNA + AH2 + O2 = 5-hydroxyuridine(34) in tRNA + A + H2O. Catalyzes oxygen-dependent 5-hydroxyuridine (ho5U) modification at position 34 in tRNAs. The polypeptide is tRNA uridine(34) hydroxylase (Listeria monocytogenes serovar 1/2a (strain ATCC BAA-679 / EGD-e)).